A 75-amino-acid polypeptide reads, in one-letter code: Large ribosomal subunit protein bL32c (75 aa).

The segment at 49-75 (SPGPTTPIKPNPKKQTGRRPRSQRRRT) is disordered. Positions 59–75 (NPKKQTGRRPRSQRRRT) are enriched in basic residues.

It belongs to the bacterial ribosomal protein bL32 family.

It is found in the plastid. Its subcellular location is the chloroplast. The polypeptide is Large ribosomal subunit protein bL32c (Nephroselmis olivacea (Green alga)).